We begin with the raw amino-acid sequence, 38 residues long: Photosystem II reaction center protein L (38 aa).

The helical transmembrane segment at 17-37 threads the bilayer; the sequence is SLYWGLLLIFVLAVLFSSYIF.

This sequence belongs to the PsbL family. In terms of assembly, PSII is composed of 1 copy each of membrane proteins PsbA, PsbB, PsbC, PsbD, PsbE, PsbF, PsbH, PsbI, PsbJ, PsbK, PsbL, PsbM, PsbT, PsbX, PsbY, PsbZ, Psb30/Ycf12, at least 3 peripheral proteins of the oxygen-evolving complex and a large number of cofactors. It forms dimeric complexes.

It is found in the plastid. It localises to the chloroplast thylakoid membrane. Functionally, one of the components of the core complex of photosystem II (PSII). PSII is a light-driven water:plastoquinone oxidoreductase that uses light energy to abstract electrons from H(2)O, generating O(2) and a proton gradient subsequently used for ATP formation. It consists of a core antenna complex that captures photons, and an electron transfer chain that converts photonic excitation into a charge separation. This subunit is found at the monomer-monomer interface and is required for correct PSII assembly and/or dimerization. In Tupiella akineta (Green alga), this protein is Photosystem II reaction center protein L.